The sequence spans 121 residues: Putative iron-sulfur cluster insertion protein ErpA (121 aa).

Cysteine 49, cysteine 113, and cysteine 115 together coordinate iron-sulfur cluster.

The protein belongs to the HesB/IscA family. As to quaternary structure, homodimer. Requires iron-sulfur cluster as cofactor.

Its function is as follows. Required for insertion of 4Fe-4S clusters. The polypeptide is Putative iron-sulfur cluster insertion protein ErpA (Polaromonas sp. (strain JS666 / ATCC BAA-500)).